The sequence spans 133 residues: Fatty acid-binding protein, heart (133 aa).

An N-acetylvaline modification is found at valine 2. At threonine 8 the chain carries Phosphothreonine. Phosphotyrosine; by Tyr-kinases is present on tyrosine 20. Serine 23 carries the phosphoserine modification. Position 30 is a phosphothreonine (threonine 30). The residue at position 83 (serine 83) is a Phosphoserine. (9Z)-octadecenoate is bound at residue 127–129 (RTY). A hexadecanoate-binding site is contributed by 127 to 129 (RTY). 127-129 (RTY) contributes to the octadecanoate binding site.

The protein belongs to the calycin superfamily. Fatty-acid binding protein (FABP) family.

Its subcellular location is the cytoplasm. Functionally, FABPs are thought to play a role in the intracellular transport of long-chain fatty acids and their acyl-CoA esters. The protein is Fatty acid-binding protein, heart (FABP3) of Bos mutus grunniens (Wild yak).